The following is a 396-amino-acid chain: Tryptophan synthase beta chain (396 aa).

Residue Lys-88 is modified to N6-(pyridoxal phosphate)lysine.

This sequence belongs to the TrpB family. In terms of assembly, tetramer of two alpha and two beta chains. It depends on pyridoxal 5'-phosphate as a cofactor.

It carries out the reaction (1S,2R)-1-C-(indol-3-yl)glycerol 3-phosphate + L-serine = D-glyceraldehyde 3-phosphate + L-tryptophan + H2O. The protein operates within amino-acid biosynthesis; L-tryptophan biosynthesis; L-tryptophan from chorismate: step 5/5. Functionally, the beta subunit is responsible for the synthesis of L-tryptophan from indole and L-serine. This chain is Tryptophan synthase beta chain, found in Leptospira biflexa serovar Patoc (strain Patoc 1 / Ames).